We begin with the raw amino-acid sequence, 146 residues long: Holo-[acyl-carrier-protein] synthase (146 aa).

Residues Asp-9 and Glu-58 each coordinate Mg(2+).

Belongs to the P-Pant transferase superfamily. AcpS family. The cofactor is Mg(2+).

The protein resides in the cytoplasm. The catalysed reaction is apo-[ACP] + CoA = holo-[ACP] + adenosine 3',5'-bisphosphate + H(+). In terms of biological role, transfers the 4'-phosphopantetheine moiety from coenzyme A to a Ser of acyl-carrier-protein. The chain is Holo-[acyl-carrier-protein] synthase from Baumannia cicadellinicola subsp. Homalodisca coagulata.